Consider the following 351-residue polypeptide: MSLLPYALARSFLFGMDAEAAHELTMDMLARGQRTPLQWAWCNETVSDPIELAGLRFPNRVGLAAGLDKNARCIDALAAMGFGFVEVGTVTPRAQPGNPKPRMFRLPEARALINRLGFNNEGLDAFVANVQRSQVRTQGRGQSKLLLGLNIGKNATTPIEDATRDYLTCLEGVYPHADYVTVNISSPNTQNLRALQSDAALDGLLGAIAEHREQLAAAQGRRVPIFVKIAPDLDEAQVAVIATTLQRHGMDGVVATNTTIRRDAVQGLRHAGETGGLSGAPVLEASNAVIRQLRAALGPTFPIIGVGGILSAEDAVSKIRAGADVVQIYTGLIYEGPALVGRAAKAIRDLR.

FMN-binding positions include 65 to 69 (AGLDK) and T89. K69 contributes to the substrate binding site. 114-118 (NRLGF) serves as a coordination point for substrate. The FMN site is built by N150 and N183. Residue N183 participates in substrate binding. Residue S186 is the Nucleophile of the active site. N188 provides a ligand contact to substrate. The FMN site is built by K228 and T256. 257–258 (NT) is a substrate binding site. Residues G279, G308, and 329–330 (YT) each bind FMN.

It belongs to the dihydroorotate dehydrogenase family. Type 2 subfamily. In terms of assembly, monomer. FMN serves as cofactor.

The protein resides in the cell membrane. It catalyses the reaction (S)-dihydroorotate + a quinone = orotate + a quinol. It participates in pyrimidine metabolism; UMP biosynthesis via de novo pathway; orotate from (S)-dihydroorotate (quinone route): step 1/1. In terms of biological role, catalyzes the conversion of dihydroorotate to orotate with quinone as electron acceptor. The polypeptide is Dihydroorotate dehydrogenase (quinone) (Acidovorax sp. (strain JS42)).